The chain runs to 91 residues: Phosphocarrier protein NPr (91 aa).

The 88-residue stretch at 3–90 (KLERQVTICN…ALVDAKFDEA (88 aa)) folds into the HPr domain. The Pros-phosphohistidine intermediate role is filled by histidine 17.

The protein belongs to the HPr family.

It is found in the cytoplasm. In terms of biological role, component of the phosphoenolpyruvate-dependent nitrogen-metabolic phosphotransferase system (nitrogen-metabolic PTS), that seems to be involved in regulating nitrogen metabolism. The phosphoryl group from phosphoenolpyruvate (PEP) is transferred to the phosphoryl carrier protein NPr by enzyme I-Ntr. Phospho-NPr then transfers it to EIIA-Ntr. Could function in the transcriptional regulation of sigma-54 dependent operons in conjunction with the NPr (PtsO) and EIIA-Ntr (PtsN) proteins. This Shewanella violacea (strain JCM 10179 / CIP 106290 / LMG 19151 / DSS12) protein is Phosphocarrier protein NPr (ptsO).